Here is a 758-residue protein sequence, read N- to C-terminus: Thiosulfate reductase molybdopterin-containing subunit PhsA (758 aa).

Positions Met1–Ala30 form a signal peptide, tat-type signal. The 4Fe-4S Mo/W bis-MGD-type domain occupies Thr41–Gln97. [4Fe-4S] cluster contacts are provided by Cys48, Cys51, Cys55, and Cys83.

Belongs to the prokaryotic molybdopterin-containing oxidoreductase family. In terms of assembly, composed of three subunits: PhsA, PhsB and PhsC. Requires [4Fe-4S] cluster as cofactor. It depends on Mo-bis(molybdopterin guanine dinucleotide) as a cofactor. Predicted to be exported by the Tat system. The position of the signal peptide cleavage has not been experimentally proven.

It localises to the periplasm. It catalyses the reaction a quinone + hydrogen sulfide + sulfite + 2 H(+) = thiosulfate + a quinol. Its function is as follows. Component of the PhsABC thiosulfate reductase that catalyzes the reduction of thiosulfate to sulfite and hydrogen sulfide, with menaquinol as the sole electron donor. Proton motive force (PMF) is required to drive transmembrane electron transfer within the reductase. The PhsA subunit contains the active site molybdenum-bis(molybdopterin guanine dinucleotide) (Mo-bis-MGD) cofactor. The chain is Thiosulfate reductase molybdopterin-containing subunit PhsA from Salmonella typhimurium (strain LT2 / SGSC1412 / ATCC 700720).